The chain runs to 413 residues: Putative competence-damage inducible protein (413 aa).

This sequence belongs to the CinA family.

The polypeptide is Putative competence-damage inducible protein (Alkaliphilus oremlandii (strain OhILAs) (Clostridium oremlandii (strain OhILAs))).